The primary structure comprises 183 residues: Alkyl hydroperoxide reductase AhpD (183 aa).

Catalysis depends on Cys132, which acts as the Proton donor. Cysteines 132 and 135 form a disulfide. Residue Cys135 is the Cysteine sulfenic acid (-SOH) intermediate of the active site.

It belongs to the AhpD family.

The enzyme catalyses N(6)-[(R)-dihydrolipoyl]-L-lysyl-[lipoyl-carrier protein] + a hydroperoxide = N(6)-[(R)-lipoyl]-L-lysyl-[lipoyl-carrier protein] + an alcohol + H2O. Antioxidant protein with alkyl hydroperoxidase activity. Required for the reduction of the AhpC active site cysteine residues and for the regeneration of the AhpC enzyme activity. The sequence is that of Alkyl hydroperoxide reductase AhpD from Acidobacterium capsulatum (strain ATCC 51196 / DSM 11244 / BCRC 80197 / JCM 7670 / NBRC 15755 / NCIMB 13165 / 161).